We begin with the raw amino-acid sequence, 823 residues long: Dolichyl-diphosphooligosaccharide--protein glycosyltransferase subunit STT3B (823 aa).

The interval 1–58 (MAEPSAPESKHKSSLNSSPWSGLMALGNSRHGHHGPGTQSASSAAAPKPGPPAGLSGG) is disordered. N-acetylalanine is present on Ala-2. At 2–41 (AEPSAPESKHKSSLNSSPWSGLMALGNSRHGHHGPGTQSA) the chain is on the cytoplasmic side. Phosphoserine occurs at positions 13, 18, and 29. The chain crosses the membrane as a helical span at residues 42-83 (SSAAAPKPGPPAGLSGGLSQPAGWQSLLSFTILFLAWLAGFS). Residues 84-170 (SRLFAVIRFE…VHIRDVCVFL (87 aa)) lie on the Lumenal side of the membrane. A DXD motif 1 motif is present at residues 98-100 (EFD). Mn(2+) is bound at residue Asp-100. Residues 171–189 (APTFSGLTSISTFLLTREL) traverse the membrane as a helical segment. Residues 190-191 (WN) lie on the Cytoplasmic side of the membrane. A helical transmembrane segment spans residues 192–209 (QGAGLLAACFIAIVPGYI). The Lumenal segment spans residues 210–220 (SRSVAGSFDNE). Residues Asp-218 and Glu-220 each coordinate Mn(2+). The short motif at 218-220 (DNE) is the DXD motif 2 element. The helical transmembrane segment at 221 to 240 (GIAIFALQFTYYLWVKSVKT) threads the bilayer. Over 241–242 (GS) the chain is Cytoplasmic. A helical membrane pass occupies residues 243 to 257 (VFWTMCCCLSYFYMV). Topologically, residues 258 to 262 (SAWGG) are lumenal. A helical transmembrane segment spans residues 263–279 (YVFIINLIPLHVFVLLL). The Cytoplasmic portion of the chain corresponds to 280-284 (MQRYS). A helical transmembrane segment spans residues 285-310 (KRVYIAYSTFYIVGLILSMQIPFVGF). At 311–318 (QPIRTSEH) the chain is on the lumenal side. The chain crosses the membrane as a helical span at residues 319–338 (MAAAGVFALLQAYAFLQYLR). Residues 339 to 347 (DRLTKQEFQ) are Cytoplasmic-facing. The chain crosses the membrane as a helical span at residues 348–368 (TLFFLGVSLAAGAVFLSVIYL). Over 369–407 (TYTGYIAPWSGRFYSLWDTGYAKIHIPIIASVSEHQPTT) the chain is Lumenal. The SVSE motif motif lies at 399-402 (SVSE). Residues 408 to 430 (WVSFFFDLHILVCTFPAGLWFCI) traverse the membrane as a helical segment. Over 431 to 436 (KNINDE) the chain is Cytoplasmic. A helical transmembrane segment spans residues 437-453 (RVFVALYAISAVYFAGV). At 454-457 (MVRL) the chain is on the lumenal side. Arg-456 lines the dolichyl diphosphooligosaccharide pocket. Residues 458 to 479 (MLTLTPVVCMLSAIAFSNVFEH) form a helical membrane-spanning segment. The Cytoplasmic portion of the chain corresponds to 480–523 (YLGDDMKRENPPVEDSSDEDDKRNPGNLYDKAGKVRKHVTEQEK). The segment at 487–526 (RENPPVEDSSDEDDKRNPGNLYDKAGKVRKHVTEQEKPEE) is disordered. Phosphoserine is present on residues Ser-495 and Ser-496. Positions 517-526 (HVTEQEKPEE) are enriched in basic and acidic residues. The helical transmembrane segment at 524 to 549 (PEEGLGPNIKSIVTMLMLMLLMMFAV) threads the bilayer. Residues 550–823 (HCTWVTSNAY…KGKKTSKKTV (274 aa)) lie on the Lumenal side of the membrane. Positions 601 to 603 (WWD) are interacts with target acceptor peptide in protein substrate. The WWDYG motif motif lies at 601–605 (WWDYG). Tyr-606 contributes to the dolichyl diphosphooligosaccharide binding site. N-linked (GlcNAc...) asparagine glycosylation is found at Asn-613 and Asn-620. An N-linked (GlcNAc...) (high mannose) asparagine glycan is attached at Asn-624. Asn-638 carries an N-linked (GlcNAc...) asparagine glycan. The DK motif signature appears at 668–675 (DINKFLWM).

The protein belongs to the STT3 family. Component of the oligosaccharyltransferase (OST) complex. There are 2 OST complexes, OST-A and OST-B, which contain STT3A or STT3B as catalytic subunit, respectively. OST-A and OST-B contain common core subunits RPN1, RPN2, OST48, OST4, DAD1 and TMEM258, and OST-B contains either MAGT1 or TUSC3 as specific accessory subunit. Requires Mg(2+) as cofactor. It depends on Mn(2+) as a cofactor.

The protein localises to the endoplasmic reticulum membrane. It carries out the reaction a di-trans,poly-cis-dolichyl diphosphooligosaccharide + L-asparaginyl-[protein] = N(4)-(oligosaccharide-(1-&gt;4)-N-acetyl-beta-D-glucosaminyl-(1-&gt;4)-N-acetyl-beta-D-glucosaminyl)-L-asparaginyl-[protein] + a di-trans,poly-cis-dolichyl diphosphate + H(+). It participates in protein modification; protein glycosylation. In terms of biological role, catalytic subunit of the oligosaccharyl transferase (OST) complex that catalyzes the initial transfer of a defined glycan (Glc(3)Man(9)GlcNAc(2) in eukaryotes) from the lipid carrier dolichol-pyrophosphate to an asparagine residue within an Asn-X-Ser/Thr consensus motif in nascent polypeptide chains, the first step in protein N-glycosylation. N-glycosylation occurs cotranslationally and the complex associates with the Sec61 complex at the channel-forming translocon complex that mediates protein translocation across the endoplasmic reticulum (ER). All subunits are required for a maximal enzyme activity. This subunit contains the active site and the acceptor peptide and donor lipid-linked oligosaccharide (LLO) binding pockets. STT3B is present in a small subset of OST complexes and mediates both cotranslational and post-translational N-glycosylation of target proteins: STT3B-containing complexes are required for efficient post-translational glycosylation and while they are less competent than STT3A-containing complexes for cotranslational glycosylation, they have the ability to mediate glycosylation of some nascent sites that are not accessible for STT3A. STT3B-containing complexes also act post-translationally and mediate modification of skipped glycosylation sites in unfolded proteins. Plays a role in ER-associated degradation (ERAD) pathway that mediates ubiquitin-dependent degradation of misfolded endoplasmic reticulum proteins by mediating N-glycosylation of unfolded proteins, which are then recognized by the ERAD pathway and targeted for degradation. This Mus musculus (Mouse) protein is Dolichyl-diphosphooligosaccharide--protein glycosyltransferase subunit STT3B.